Consider the following 601-residue polypeptide: Leucine zipper putative tumor suppressor 1 (601 aa).

Gly-2 carries the N-myristoyl glycine lipid modification. Positions 135–190 (GAILHSSPESTNHQLHPMPPDKPKEQELKPGLCSGALSDSGRNSMSSLPTHSTTSS) are disordered. A compositionally biased stretch (basic and acidic residues) spans 153–162 (PPDKPKEQEL). Polar residues predominate over residues 174 to 190 (SGRNSMSSLPTHSTTSS). A coiled-coil region spans residues 255–573 (PLSTDECTIQ…RLEKALQQLA (319 aa)).

This sequence belongs to the LZTS family. Binds EEF1G, TLK2 and CDK1. Phosphorylated on serine residues. Hyperphosphorylated by the cAMP-dependent kinase PKA during cell-cycle progression. As to expression, highly expressed in brain, in particular in cortex, the CA2 region of the hippocampus, olfactory bulb, striatum and pons. Not detectable in the other tissues tested.

It is found in the cytoplasm. The protein localises to the cell membrane. The protein resides in the cell projection. It localises to the dendritic spine. Its subcellular location is the postsynaptic density. It is found in the synapse. In terms of biological role, involved in the regulation of cell growth. May stabilize the active CDC2-cyclin B1 complex and thereby contribute to the regulation of the cell cycle and the prevention of uncontrolled cell proliferation. May act as tumor suppressor. This Rattus norvegicus (Rat) protein is Leucine zipper putative tumor suppressor 1 (Lzts1).